Here is a 743-residue protein sequence, read N- to C-terminus: Probable TonB-dependent siderophore receptor PiuA (743 aa).

Residues 1 to 28 (MSLIRTRKKIVSSAIASSLSMIATTAMA) form the signal peptide. Positions 61–167 (PLLDTPKSVS…VGGSINMISK (107 aa)) constitute a TBDR plug domain. One can recognise a TBDR beta-barrel domain in the interval 172–743 (GDFLEGSVAA…SAVLAVNFKY (572 aa)). 2 disulfides stabilise this stretch: C408–C416 and C627–C632.

The protein belongs to the TonB-dependent receptor family.

Its subcellular location is the cell outer membrane. In terms of biological role, probably involved in the initial step of iron uptake by binding iron chelating siderophores, thereby allowing extraction of iron from the environment. May bind the siderophore, ferric enterobactin, with micromolar affinity. In Acinetobacter baumannii (strain ATCC 19606 / DSM 30007 / JCM 6841 / CCUG 19606 / CIP 70.34 / NBRC 109757 / NCIMB 12457 / NCTC 12156 / 81), this protein is Probable TonB-dependent siderophore receptor PiuA.